Here is a 547-residue protein sequence, read N- to C-terminus: Chaperonin GroEL 1 (547 aa).

ATP-binding positions include 30 to 33 (TLGP), Lys51, 87 to 91 (DGTTT), Gly415, and Asp496.

The protein belongs to the chaperonin (HSP60) family. As to quaternary structure, forms a cylinder of 14 subunits composed of two heptameric rings stacked back-to-back. Interacts with the co-chaperonin GroES.

It localises to the cytoplasm. The enzyme catalyses ATP + H2O + a folded polypeptide = ADP + phosphate + an unfolded polypeptide.. In terms of biological role, together with its co-chaperonin GroES, plays an essential role in assisting protein folding. The GroEL-GroES system forms a nano-cage that allows encapsulation of the non-native substrate proteins and provides a physical environment optimized to promote and accelerate protein folding. The sequence is that of Chaperonin GroEL 1 from Rhodopseudomonas palustris (strain BisA53).